The sequence spans 264 residues: MHNPDGSASPTADPGSELQTLGQAARRPPPPRAGHDAPRRTRPSARKPLSCFSRRPMPTREPPKTRGSRGHLHTHPPGPGPPLQGLAPRGLKTSAPRPPCQPQPGPHKAKTKKIVFEDELLSQALLGAKKPIGAIPKGHKPRPHPVPDYELKYPPVSSERERSRYVAVFQDQYGEFLELQHEVGCAQAKLRQLEALLSSLPPPQSQKEAQVAARVWREFEMKRMDPGFLDKQARCHYLKGKLRHLKTQIQKFDDQGDSEGSVYF.

Residues 1-10 (MHNPDGSASP) show a composition bias toward polar residues. The tract at residues 1–112 (MHNPDGSASP…QPGPHKAKTK (112 aa)) is disordered. Pro residues predominate over residues 96–105 (PRPPCQPQPG). Positions 147-257 (PDYELKYPPV…QIQKFDDQGD (111 aa)) constitute an OCEL domain.

Belongs to the ELL/occludin family.

The chain is Occludin/ELL domain-containing protein 1 (OCEL1) from Homo sapiens (Human).